A 199-amino-acid chain; its full sequence is Imidazole glycerol phosphate synthase subunit HisH (199 aa).

Residues R2–K199 enclose the Glutamine amidotransferase type-1 domain. C76 (nucleophile) is an active-site residue. Catalysis depends on residues H178 and E180.

Heterodimer of HisH and HisF.

The protein resides in the cytoplasm. The enzyme catalyses 5-[(5-phospho-1-deoxy-D-ribulos-1-ylimino)methylamino]-1-(5-phospho-beta-D-ribosyl)imidazole-4-carboxamide + L-glutamine = D-erythro-1-(imidazol-4-yl)glycerol 3-phosphate + 5-amino-1-(5-phospho-beta-D-ribosyl)imidazole-4-carboxamide + L-glutamate + H(+). It carries out the reaction L-glutamine + H2O = L-glutamate + NH4(+). It participates in amino-acid biosynthesis; L-histidine biosynthesis; L-histidine from 5-phospho-alpha-D-ribose 1-diphosphate: step 5/9. Functionally, IGPS catalyzes the conversion of PRFAR and glutamine to IGP, AICAR and glutamate. The HisH subunit catalyzes the hydrolysis of glutamine to glutamate and ammonia as part of the synthesis of IGP and AICAR. The resulting ammonia molecule is channeled to the active site of HisF. The polypeptide is Imidazole glycerol phosphate synthase subunit HisH (Sulfolobus acidocaldarius (strain ATCC 33909 / DSM 639 / JCM 8929 / NBRC 15157 / NCIMB 11770)).